The sequence spans 443 residues: MSHEEDLIDYSDEELQTTDAAAAAATAAAAANGAAVKKGDLTVSGARADKKGSYVGVHSTGFRDFLLKPELLRAITDCGFEHPSEVQQVCIPTAILKVDVLCQAKSGLGKTAVFVLTTLNQLEPVPGECSILVMCHTRELAYQIKNEYARFSKYLPDVKTAVFYGGTPMQKDIEVLSSKDTYPNIVVGTPGRLNALVREKKLSLRNIKAFVLDECDKMLDQIDMRRDVQEIFRSTPADKQVMMFSATLSQEIRPICKKFMRNPLEVYVDDDTKLTLHGLQQYYIKLSEAEKNRKLNELLDNLEFNQVIIFVKSTLRANELDKLLRECNFPSIAVHSGVSQEERIKRYKEFKEFNKRICVATDVFGRGIDIERINLAINYDMPADADSYLHRVGRAGRFGTKGLSISFVSSEDDMKTLKDIEKRFEVALPEYPEEGVDASTYMA.

Positions 60–88 (TGFRDFLLKPELLRAITDCGFEHPSEVQQ) match the Q motif motif. The Helicase ATP-binding domain maps to 91-266 (IPTAILKVDV…KKFMRNPLEV (176 aa)). 104-111 (AKSGLGKT) serves as a coordination point for ATP. Positions 213 to 216 (DECD) match the DEAD box motif. Positions 294–439 (KLNELLDNLE…EYPEEGVDAS (146 aa)) constitute a Helicase C-terminal domain.

The protein belongs to the DEAD box helicase family. DECD subfamily.

It is found in the nucleus. The enzyme catalyses ATP + H2O = ADP + phosphate + H(+). In terms of biological role, ATP-binding RNA helicase involved in transcription elongation and required for the export of mRNA out of the nucleus. SUB2 also plays a role in pre-mRNA splicing and spliceosome assembly. May be involved in rDNA and telomeric silencing, and maintenance of genome integrity. The protein is ATP-dependent RNA helicase SUB2 (SUB2) of Coccidioides immitis (strain RS) (Valley fever fungus).